We begin with the raw amino-acid sequence, 705 residues long: MKKYLAITSKGLENLLADELIALGVTDPKVVHAGVKFEAPIEVVYRCCLWSRIASRFIQILSEFDVRDDMDLYLGASSINWPSYFSADKTLVVDFNGTNREIRNSQYGALKVKDAIVDRFTKADLPRPNISKVEPDLRVHMRLSGEKGILGFDLVGSGLHQRGYRTEAGRAPLRETLAAALVMRSTWDESKPLLDPMCGSGTLLIEAALMACEMAPGVKREKWCFEALNDFDAELWAEIRSEARVKSRRGVKKVDARFYGFDRDYRVIQTARENARRAGVEDLITFDVGDATKVERPEGFENGVILCNPPYGERLSTEPALIALYSEFGRQLKEVFGGCTASIYSSNDDLLACLRMRADKQFKLNNGALPCVQKNYSITESAERKEAVSVEVAPEFMNRLKKNIGKIGKWARKEKLDCYRIYDADLPDYNAAIDVYKDYIIIQEYAAPKTISEDKARRRLTDMIRATVLVTGVETNNVILKVRQKQSGKNQYQKLAEKSRYFDVEEYGVKLIVNLQDYLDTGLFLDHKLTRKMLGEMAAGKDFLNLFAYTGSATVHAACGGAKSTMTIDMSRTYLEWAQKNMNTNGQTGTQHQFLQADCLQWLQQADGEFDLIFIDPPTFSNSKRMEQTFDVQRDHIMLLENLKRMLRENGTIVFSNNKRNFKMDDAALEKAGLKAKNISKQTLPLDFARNKHIHNCWIITHKED.

The 112-residue stretch at 43-154 (VVYRCCLWSR…GEKGILGFDL (112 aa)) folds into the THUMP domain.

This sequence belongs to the methyltransferase superfamily. RlmKL family.

It is found in the cytoplasm. The enzyme catalyses guanosine(2445) in 23S rRNA + S-adenosyl-L-methionine = N(2)-methylguanosine(2445) in 23S rRNA + S-adenosyl-L-homocysteine + H(+). It catalyses the reaction guanosine(2069) in 23S rRNA + S-adenosyl-L-methionine = N(2)-methylguanosine(2069) in 23S rRNA + S-adenosyl-L-homocysteine + H(+). Functionally, specifically methylates the guanine in position 2445 (m2G2445) and the guanine in position 2069 (m7G2069) of 23S rRNA. This is Ribosomal RNA large subunit methyltransferase K/L from Aliivibrio fischeri (strain MJ11) (Vibrio fischeri).